The primary structure comprises 287 residues: Glycine--tRNA ligase alpha subunit (287 aa).

This sequence belongs to the class-II aminoacyl-tRNA synthetase family. Tetramer of two alpha and two beta subunits.

It localises to the cytoplasm. The enzyme catalyses tRNA(Gly) + glycine + ATP = glycyl-tRNA(Gly) + AMP + diphosphate. The sequence is that of Glycine--tRNA ligase alpha subunit from Campylobacter curvus (strain 525.92).